The primary structure comprises 332 residues: Glycerol-3-phosphate dehydrogenase [NAD(P)+] (332 aa).

NADPH contacts are provided by Trp11, Arg30, and Lys108. Positions 108, 137, and 139 each coordinate sn-glycerol 3-phosphate. Position 141 (Ala141) interacts with NADPH. Sn-glycerol 3-phosphate is bound by residues Lys192, Asp245, Ser255, Arg256, and Asn257. The Proton acceptor role is filled by Lys192. Arg256 contributes to the NADPH binding site. NADPH-binding residues include Val280 and Glu282.

The protein belongs to the NAD-dependent glycerol-3-phosphate dehydrogenase family.

It localises to the cytoplasm. It catalyses the reaction sn-glycerol 3-phosphate + NAD(+) = dihydroxyacetone phosphate + NADH + H(+). The enzyme catalyses sn-glycerol 3-phosphate + NADP(+) = dihydroxyacetone phosphate + NADPH + H(+). The protein operates within membrane lipid metabolism; glycerophospholipid metabolism. Catalyzes the reduction of the glycolytic intermediate dihydroxyacetone phosphate (DHAP) to sn-glycerol 3-phosphate (G3P), the key precursor for phospholipid synthesis. In Burkholderia multivorans (strain ATCC 17616 / 249), this protein is Glycerol-3-phosphate dehydrogenase [NAD(P)+].